Here is a 448-residue protein sequence, read N- to C-terminus: MAIKRPKGTQDHLPDGSPKLSLDTRAAAFTFVRETARRVLERAGAQFTDTPLFEEAELVQRGVGGSTDIVRKEMFTVYYFGDHGGFILRPEGTAGLVRSYLQNGLKQLPAPLKLWTHGPMFRAENVQKGRLRQFHQVDYEVLGSADALVDAEAIALMTEVVRALGVQKVKVKLGSIGDPEDREAYNTYLRELFTPHLEALSDDSKDRLNRNPMRILDSKSESDQTLIAQLGVRPMLDFLGEGARTHFEQVQAYLNAWDVSYEVDPSIVRGLDYYRRTAWELHHEGVGAKSALGGGGRYDGLAQELGSKEVVPGIGWAFGIERLLLAMDAEGVALPETSGPLLYVAAMDDENVTYAATVALTTRRTARAEFAYRAMKPAAAFRDAERRGARFIALIGSDEVAQDTLSIKNLQTGQQSKVQTRDLQAFLAGQADQHSPAIPHDPTPQEKA.

2 disordered regions span residues 1–20 and 428–448; these read MAIK…SPKL and AGQA…QEKA.

Belongs to the class-II aminoacyl-tRNA synthetase family. In terms of assembly, homodimer.

The protein localises to the cytoplasm. It carries out the reaction tRNA(His) + L-histidine + ATP = L-histidyl-tRNA(His) + AMP + diphosphate + H(+). In Deinococcus deserti (strain DSM 17065 / CIP 109153 / LMG 22923 / VCD115), this protein is Histidine--tRNA ligase.